Consider the following 399-residue polypeptide: Dual-specificity RNA methyltransferase RlmN (399 aa).

The active-site Proton acceptor is Glu-122. A Radical SAM core domain is found at 128–371 (ETDRGTLCVS…VRTPRGRDIL (244 aa)). Cys-135 and Cys-374 are disulfide-bonded. Cys-142, Cys-146, and Cys-149 together coordinate [4Fe-4S] cluster. Residues 200–201 (GE), Ser-232, 254–256 (SLH), and Asn-331 contribute to the S-adenosyl-L-methionine site. The S-methylcysteine intermediate role is filled by Cys-374.

It belongs to the radical SAM superfamily. RlmN family. [4Fe-4S] cluster is required as a cofactor.

The protein resides in the cytoplasm. The enzyme catalyses adenosine(2503) in 23S rRNA + 2 reduced [2Fe-2S]-[ferredoxin] + 2 S-adenosyl-L-methionine = 2-methyladenosine(2503) in 23S rRNA + 5'-deoxyadenosine + L-methionine + 2 oxidized [2Fe-2S]-[ferredoxin] + S-adenosyl-L-homocysteine. It catalyses the reaction adenosine(37) in tRNA + 2 reduced [2Fe-2S]-[ferredoxin] + 2 S-adenosyl-L-methionine = 2-methyladenosine(37) in tRNA + 5'-deoxyadenosine + L-methionine + 2 oxidized [2Fe-2S]-[ferredoxin] + S-adenosyl-L-homocysteine. In terms of biological role, specifically methylates position 2 of adenine 2503 in 23S rRNA and position 2 of adenine 37 in tRNAs. m2A2503 modification seems to play a crucial role in the proofreading step occurring at the peptidyl transferase center and thus would serve to optimize ribosomal fidelity. The protein is Dual-specificity RNA methyltransferase RlmN of Rhodopseudomonas palustris (strain HaA2).